The following is a 79-amino-acid chain: Large ribosomal subunit protein bL31 (79 aa).

This sequence belongs to the bacterial ribosomal protein bL31 family. Type A subfamily. As to quaternary structure, part of the 50S ribosomal subunit.

Functionally, binds the 23S rRNA. The sequence is that of Large ribosomal subunit protein bL31 (rpmE) from Rickettsia bellii (strain RML369-C).